The following is a 608-amino-acid chain: Albumin (608 aa).

An N-terminal signal peptide occupies residues 1-18 (MKWVTFLLLLFISGSAFS). A propeptide spanning residues 19–24 (RGVFRR) is cleaved from the precursor. Albumin domains are found at residues 19 to 211 (RGVF…AVKE), 212 to 403 (KALV…EFQP), and 404 to 601 (LVEE…NLVA). H27 is a Cu cation binding site. Residue S29 is modified to Phosphoserine. Residues E30 and D37 each coordinate Ca(2+). Cysteines 77 and 86 form a disulfide. S89 is modified (phosphoserine). H91 is a binding site for Zn(2+). 6 disulfides stabilise this stretch: C99–C115, C114–C125, C148–C193, C192–C201, C224–C270, and C269–C277. E268 is a binding site for Ca(2+). 2 residues coordinate Zn(2+): H271 and D273. 3 residues coordinate Ca(2+): D273, E276, and D279. 8 disulfide bridges follow: C289/C303, C302/C313, C340/C385, C384/C393, C416/C462, C461/C472, C485/C501, and C500/C511. S297 is subject to Phosphoserine. S443 carries the phosphoserine modification. 2 positions are modified to phosphothreonine: T444 and T446. An N6-succinyllysine modification is found at K460. The residue at position 513 (S513) is a Phosphoserine. 2 cysteine pairs are disulfide-bonded: C538–C583 and C582–C591. K543 carries the N6-succinyllysine modification. At K558 the chain carries N6-methyllysine. Residue T570 is modified to Phosphothreonine. Position 588 is an N6-succinyllysine (K588).

It belongs to the ALB/AFP/VDB family. As to quaternary structure, interacts with FCGRT; this interaction regulates ALB homeostasis. Interacts with TASOR. In plasma, occurs in a covalently-linked complex with chromophore-bound alpha-1-microglobulin; this interaction does not prevent fatty acid binding to ALB. Phosphorylated by FAM20C in the extracellular medium. As to expression, plasma.

The protein localises to the secreted. Its function is as follows. Binds water, Ca(2+), Na(+), K(+), fatty acids, hormones, bilirubin and drugs. Its main function is the regulation of the colloidal osmotic pressure of blood. Major zinc transporter in plasma, typically binds about 80% of all plasma zinc. Major calcium and magnesium transporter in plasma, binds approximately 45% of circulating calcium and magnesium in plasma. Potentially has more than two calcium-binding sites and might additionally bind calcium in a non-specific manner. The shared binding site between zinc and calcium at residue Asp-273 suggests a crosstalk between zinc and calcium transport in the blood. The rank order of affinity is zinc &gt; calcium &gt; magnesium. Binds to the bacterial siderophore enterobactin and inhibits enterobactin-mediated iron uptake of E.coli from ferric transferrin, and may thereby limit the utilization of iron and growth of enteric bacteria such as E.coli. Does not prevent iron uptake by the bacterial siderophore aerobactin. This chain is Albumin (Alb), found in Rattus norvegicus (Rat).